Here is a 38-residue protein sequence, read N- to C-terminus: Photosystem II reaction center protein L (38 aa).

Residues 17 to 37 (SLFWGLLLIFILAVLFSSYFF) form a helical membrane-spanning segment.

The protein belongs to the PsbL family. PSII is composed of 1 copy each of membrane proteins PsbA, PsbB, PsbC, PsbD, PsbE, PsbF, PsbH, PsbI, PsbJ, PsbK, PsbL, PsbM, PsbT, PsbX, PsbY, PsbZ, Psb30/Ycf12, at least 3 peripheral proteins of the oxygen-evolving complex and a large number of cofactors. It forms dimeric complexes.

The protein localises to the plastid. The protein resides in the chloroplast thylakoid membrane. One of the components of the core complex of photosystem II (PSII). PSII is a light-driven water:plastoquinone oxidoreductase that uses light energy to abstract electrons from H(2)O, generating O(2) and a proton gradient subsequently used for ATP formation. It consists of a core antenna complex that captures photons, and an electron transfer chain that converts photonic excitation into a charge separation. This subunit is found at the monomer-monomer interface and is required for correct PSII assembly and/or dimerization. This chain is Photosystem II reaction center protein L, found in Guillardia theta (Cryptophyte).